Consider the following 168-residue polypeptide: DNA damage-inducible transcript 3 protein (168 aa).

The tract at residues 10–18 (FETVSSWEL) is interaction with TRIB3. The interval 10 to 26 (FETVSSWELEAWYEDLQ) is N-terminal. A phosphoserine; by CK2 mark is found at serine 14, serine 15, serine 30, and serine 31. Residues 34-130 (IGGTYISSPG…EKEQENERKV (97 aa)) are disordered. The segment covering 73–88 (TSTSQSPRSPDSSQSS) has biased composition (low complexity). Serine 78 and serine 81 each carry phosphoserine; by MAPK14. The 64-residue stretch at 98–161 (QGRTRKRKQS…ETTRRALIDR (64 aa)) folds into the bZIP domain. The basic motif stretch occupies residues 100–129 (RTRKRKQSGQCAARAGKQRMKEKEQENERK). The segment covering 118-130 (RMKEKEQENERKV) has biased composition (basic and acidic residues). Residues 133-147 (LAEENERLKLEIERL) are leucine-zipper.

Belongs to the bZIP family. As to quaternary structure, heterodimer. Interacts with TCF7L2/TCF4, EP300/P300, HDAC1, HDAC5 and HDAC6. Interacts with TRIB3 which blocks its association with EP300/P300. Interacts with FOXO3, CEBPB and ATF4. In terms of processing, ubiquitinated, leading to its degradation by the proteasome. Post-translationally, phosphorylation at serine residues by MAPK14 enhances its transcriptional activation activity while phosphorylation at serine residues by CK2 inhibits its transcriptional activation activity.

The protein resides in the cytoplasm. The protein localises to the nucleus. In terms of biological role, multifunctional transcription factor in ER stress response. Plays an essential role in the response to a wide variety of cell stresses and induces cell cycle arrest and apoptosis in response to ER stress. Plays a dual role both as an inhibitor of CCAAT/enhancer-binding protein (C/EBP) function and as an activator of other genes. Acts as a dominant-negative regulator of C/EBP-induced transcription: dimerizes with members of the C/EBP family, impairs their association with C/EBP binding sites in the promoter regions, and inhibits the expression of C/EBP regulated genes. Positively regulates the transcription of TRIB3, IL6, IL8, IL23, TNFRSF10B/DR5, PPP1R15A/GADD34, BBC3/PUMA, BCL2L11/BIM and ERO1L. Negatively regulates; expression of BCL2 and MYOD1, ATF4-dependent transcriptional activation of asparagine synthetase (ASNS), CEBPA-dependent transcriptional activation of hepcidin (HAMP) and CEBPB-mediated expression of peroxisome proliferator-activated receptor gamma (PPARG). Inhibits the canonical Wnt signaling pathway by binding to TCF7L2/TCF4, impairing its DNA-binding properties and repressing its transcriptional activity. Plays a regulatory role in the inflammatory response through the induction of caspase-11 (CASP4/CASP11) which induces the activation of caspase-1 (CASP1) and both these caspases increase the activation of pro-IL1B to mature IL1B which is involved in the inflammatory response. Acts as a major regulator of postnatal neovascularization through regulation of endothelial nitric oxide synthase (NOS3)-related signaling. This Rattus norvegicus (Rat) protein is DNA damage-inducible transcript 3 protein (Ddit3).